The chain runs to 77 residues: NEDD8-like protein RUB1 (77 aa).

The Ubiquitin-like domain occupies 1–74 (MIVKVKTLTG…MQLHLVLTLR (74 aa)). Gly-76 participates in a covalent cross-link: Glycyl lysine isopeptide (Gly-Lys) (interchain with K-? in acceptor proteins). Residue Asn-77 is a propeptide.

In terms of assembly, interacts with CDC53 and DCN1.

Its function is as follows. Ubiquitin-like protein modifier that can be covalently attached to lysine residues of target proteins. Activated by the dimeric UBA3-ULA1 E1 enzyme and conjugated by the E2 UBC12 to substrate proteins. RUB1-conjugated (neddylated) substrate proteins include the cullins CDC53, RTT101 and CUL3, and the modification enhances the ubiquitin-ligase activity of the corresponding cullin-RING-based E3 ubiquitin-protein ligase complexes (CRLs). The sequence is that of NEDD8-like protein RUB1 (RUB1) from Saccharomyces cerevisiae (strain ATCC 204508 / S288c) (Baker's yeast).